We begin with the raw amino-acid sequence, 362 residues long: Protein indeterminate-domain 16 (362 aa).

Residues 1–22 are disordered; that stretch reads MELTQPIRENGDPQGHQLTDPD. C2H2-type zinc fingers lie at residues 39–61 and 82–112; these read YVCE…RRRH and YVCP…RRKH. Residues 118-142 form a CCHC-type 1; atypical zinc finger; the sequence is WVCERCSKGYAVQSDYKAHLKTCGS. Zn(2+) is bound by residues Cys-120, Cys-123, His-136, Cys-140, Cys-147, Cys-149, His-162, and Cys-166. The CCHC-type 2; atypical zinc-finger motif lies at 145-168; sequence HSCDCGRVFSRVESFIEHQDTCTI. The segment at 155 to 167 is SHR-binding; sequence RVESFIEHQDTCT. Residues 247 to 278 are disordered; sequence SAQARHNEKRETSLTKERANEEARKAEETRQE. Residues 251–278 show a composition bias toward basic and acidic residues; it reads RHNEKRETSLTKERANEEARKAEETRQE. Residues 252–319 are a coiled coil; it reads HNEKRETSLT…VREEAIKRIN (68 aa).

In terms of tissue distribution, highly expressed in leaves, hypocotyls, roots, vasculature of cotyledons, floral organs and in the endodermis and vasculaturenof inflorescence stems.

Its subcellular location is the nucleus. In terms of biological role, transcription factor regulating lateral organ morphogenesis and gravitropic responses. Has a redundant role with IDD14 in directing leaf and floral organ morphogenesis. Acts cooperatively with IDD15 to control silique and branche orientation. Involved in the establishment of auxin gradients through the regulation of auxin biosynthesis and transport. In Arabidopsis thaliana (Mouse-ear cress), this protein is Protein indeterminate-domain 16.